The sequence spans 620 residues: MAU2 chromatid cohesion factor homolog (620 aa).

3 TPR repeats span residues 90-123, 445-478, and 485-518; these read FDTA…SQHN, GSFY…ANAE, and SCSL…ASKI.

This sequence belongs to the SCC4/mau-2 family. In terms of assembly, component of the cohesin loading complex.

The protein resides in the nucleus. The protein localises to the nucleoplasm. In terms of biological role, required for association of the cohesin complex with chromatin during interphase. Plays a role in sister chromatid cohesion and normal progression through prometaphase. This is MAU2 chromatid cohesion factor homolog from Aedes aegypti (Yellowfever mosquito).